The following is a 487-amino-acid chain: Putative sugar kinase YoaC (487 aa).

It belongs to the FGGY kinase family.

The chain is Putative sugar kinase YoaC (yoaC) from Bacillus subtilis (strain 168).